The sequence spans 452 residues: Activating transcription factor 7-interacting protein 2 (452 aa).

S184 carries the phosphoserine modification. A disordered region spans residues 185-206 (RSKRISSVNHTPLNSSEKAGRK). The residue at position 257 (S257) is a Phosphoserine. Residues 346-450 (PPQKPELKVK…IKSIPRFSEN (105 aa)) enclose the Fibronectin type-III domain.

Belongs to the MCAF family. In terms of assembly, interacts with MBD1, SETDB1 and SP1. Probably forms a complex with SETDB1 and MBD1. In terms of tissue distribution, expressed in testis.

Its subcellular location is the nucleus. Functionally, recruiter that couples transcriptional factors to general transcription apparatus and thereby modulates transcription regulation and chromatin formation. Can both act as an activator or a repressor depending on the context. Mediates MBD1-dependent transcriptional repression, probably by recruiting complexes containing SETDB1. The complex formed with MBD1 and SETDB1 represses transcription and probably couples DNA methylation and histone H3 'Lys-9' trimethylation (H3K9me3) activity. The polypeptide is Activating transcription factor 7-interacting protein 2 (Atf7ip2) (Mus musculus (Mouse)).